Reading from the N-terminus, the 377-residue chain is MRTQIYISVTVLILLLKKSDLEAVRVPSPESVSVQCDSYGVEARWEYPEVHQDVYFQVKVKDEFTERDSSRTKNLHLNISSMLFRPAYNRYCVTVTAVRGGEKSDPSDFFIFSFNENAAAYIKCSLDFPEVELSPKDGRLHVQFTNPLHLYRNSPALRDLSEDLKYCIETDQGKNKVCETCQMKQNASCETSVVFSEHRGEYCFSLTGNIGQRIFNPRSSCFTGDIRRYTPFTVYLYPVLGVTLTLLFITGIIILLEKKCNSEMKKKVPSMFPHFFDFGETQSHLPKTLCVVADKVEPHLQIELVEDPEEQTSLVPLSDNKDLEGVYSEDKNSYGPNDLVEDEQSDLSDFYDCPHAPKQKREMSPGDTVDSYGPRLL.

An N-terminal signal peptide occupies residues 1–23; it reads MRTQIYISVTVLILLLKKSDLEA. The Extracellular segment spans residues 24–235; it reads VRVPSPESVS…IRRYTPFTVY (212 aa). The region spanning 26–117 is the Fibronectin type-III domain; it reads VPSPESVSVQ…DFFIFSFNEN (92 aa). 2 N-linked (GlcNAc...) asparagine glycosylation sites follow: asparagine 78 and asparagine 186. The chain crosses the membrane as a helical span at residues 236-256; it reads LYPVLGVTLTLLFITGIIILL. Residues 257–377 are Cytoplasmic-facing; the sequence is EKKCNSEMKK…TVDSYGPRLL (121 aa). A disordered region spans residues 326-377; sequence VYSEDKNSYGPNDLVEDEQSDLSDFYDCPHAPKQKREMSPGDTVDSYGPRLL.

Belongs to the type II cytokine receptor family. Highly expressed in spleen. Also detected in brain, kidney, gill, intestine and heart. Expressed at very low levels in muscle. In immune cell populations, shows highest expression in monocytes, and slightly lower expression in peripheral blood leukocytes, splenocytes, neutrophils and mature macrophages.

Its subcellular location is the cell membrane. Its function is as follows. Receptor which shows binding specificity for the cytokine ifng1r (interferon gamma-related). In Carassius auratus (Goldfish), this protein is Interferon gamma receptor 1.